We begin with the raw amino-acid sequence, 152 residues long: Large ribosomal subunit protein bL9 (152 aa).

The protein belongs to the bacterial ribosomal protein bL9 family.

Binds to the 23S rRNA. This chain is Large ribosomal subunit protein bL9, found in Synechococcus sp. (strain CC9605).